Here is a 120-residue protein sequence, read N- to C-terminus: Chaperonin GroEL (120 aa).

23-27 is an ATP binding site; that stretch reads DGTTT.

It belongs to the chaperonin (HSP60) family. As to quaternary structure, forms a cylinder of 14 subunits composed of two heptameric rings stacked back-to-back. Interacts with the co-chaperonin GroES.

The protein localises to the cytoplasm. The catalysed reaction is ATP + H2O + a folded polypeptide = ADP + phosphate + an unfolded polypeptide.. In terms of biological role, together with its co-chaperonin GroES, plays an essential role in assisting protein folding. The GroEL-GroES system forms a nano-cage that allows encapsulation of the non-native substrate proteins and provides a physical environment optimized to promote and accelerate protein folding. The polypeptide is Chaperonin GroEL (Mycobacterium scrofulaceum).